The following is a 269-amino-acid chain: tRNA pseudouridine synthase A (269 aa).

Asp55 functions as the Nucleophile in the catalytic mechanism. Tyr111 contributes to the substrate binding site.

Belongs to the tRNA pseudouridine synthase TruA family.

The enzyme catalyses uridine(38/39/40) in tRNA = pseudouridine(38/39/40) in tRNA. Its function is as follows. Formation of pseudouridine at positions 38, 39 and 40 in the anticodon stem and loop of transfer RNAs. The polypeptide is tRNA pseudouridine synthase A (Methanosarcina barkeri (strain Fusaro / DSM 804)).